A 172-amino-acid polypeptide reads, in one-letter code: Large ribosomal subunit protein uL10 (172 aa).

It belongs to the universal ribosomal protein uL10 family. In terms of assembly, part of the ribosomal stalk of the 50S ribosomal subunit. The N-terminus interacts with L11 and the large rRNA to form the base of the stalk. The C-terminus forms an elongated spine to which L12 dimers bind in a sequential fashion forming a multimeric L10(L12)X complex.

In terms of biological role, forms part of the ribosomal stalk, playing a central role in the interaction of the ribosome with GTP-bound translation factors. The protein is Large ribosomal subunit protein uL10 (rplJ) of Liberibacter africanus subsp. capensis.